The chain runs to 394 residues: MNQCGTITAVFEFEIKQRDGRARTATFQTPRGAVTTPMFMPVGTQGTVKGISPQELLEIGSQMILANTYHLMLRPGEQLVKAHGGLPGFTAYPGPFLTDSGGFQVMSLGHMRKISEEGVVFKNHLDGSRVELTPERSIQVQEALGADVIMAFDECPPYPAERPYIEASLDRTVRWLERCHAVKTKDDQALFAIVQGGVHEDLRLKSLEATLPFATPGFAVGGLAVGESKEEMYPAVAFTAGRLPENKPRYLMGVGHPEDLVAGVALGIDMFDCVYPTRTGRFGYALTDDGRLNLNSSAPRTQLQPIDAECDCYACRHYTRAYLAHLLRAEEMLAPRMLSLHNLRYLHRLVERMRVAINGQQFHPWAADWSERYFHGNVPGWFTSAFERSTQSEI.

Aspartate 99 serves as the catalytic Proton acceptor. Substrate is bound by residues aspartate 99–phenylalanine 103, aspartate 153, glutamine 195, and glycine 222. Residues glycine 253 to aspartate 259 are RNA binding. Aspartate 272 functions as the Nucleophile in the catalytic mechanism. Residues threonine 277–arginine 281 are RNA binding; important for wobble base 34 recognition. Cysteine 310, cysteine 312, cysteine 315, and histidine 341 together coordinate Zn(2+).

This sequence belongs to the queuine tRNA-ribosyltransferase family. Homodimer. Within each dimer, one monomer is responsible for RNA recognition and catalysis, while the other monomer binds to the replacement base PreQ1. It depends on Zn(2+) as a cofactor.

The enzyme catalyses 7-aminomethyl-7-carbaguanine + guanosine(34) in tRNA = 7-aminomethyl-7-carbaguanosine(34) in tRNA + guanine. Its pathway is tRNA modification; tRNA-queuosine biosynthesis. Its function is as follows. Catalyzes the base-exchange of a guanine (G) residue with the queuine precursor 7-aminomethyl-7-deazaguanine (PreQ1) at position 34 (anticodon wobble position) in tRNAs with GU(N) anticodons (tRNA-Asp, -Asn, -His and -Tyr). Catalysis occurs through a double-displacement mechanism. The nucleophile active site attacks the C1' of nucleotide 34 to detach the guanine base from the RNA, forming a covalent enzyme-RNA intermediate. The proton acceptor active site deprotonates the incoming PreQ1, allowing a nucleophilic attack on the C1' of the ribose to form the product. After dissociation, two additional enzymatic reactions on the tRNA convert PreQ1 to queuine (Q), resulting in the hypermodified nucleoside queuosine (7-(((4,5-cis-dihydroxy-2-cyclopenten-1-yl)amino)methyl)-7-deazaguanosine). The chain is Queuine tRNA-ribosyltransferase from Deinococcus radiodurans (strain ATCC 13939 / DSM 20539 / JCM 16871 / CCUG 27074 / LMG 4051 / NBRC 15346 / NCIMB 9279 / VKM B-1422 / R1).